The following is a 397-amino-acid chain: Dimethyladenosine transferase 2, mitochondrial (397 aa).

A mitochondrion-targeting transit peptide spans 1-44 (MRGLAMRLPPRLALSVLAGRGPSCILGSGAATRKDWQERNRRSF). Ile75, Glu124, and Asp150 together coordinate S-adenosyl-L-methionine. The segment at 329–330 (KR) is DNA-binding.

It belongs to the class I-like SAM-binding methyltransferase superfamily. rRNA adenine N(6)-methyltransferase family. KsgA subfamily. Homodimer. Component of the mitochondrial transcription initiation complex, composed at least of TFB2M, TFAM and POLRMT. In this complex TFAM recruits POLRMT to the promoter whereas TFB2M induces structural changes in POLRMT to enable promoter opening and trapping of the DNA non-template strand. Interacts with mitochondrial RNA polymerase POLRMT. Interacts with TFAM.

Its subcellular location is the mitochondrion. The enzyme catalyses adenosine in rRNA + S-adenosyl-L-methionine = N(6)-methyladenosine in rRNA + S-adenosyl-L-homocysteine + H(+). Functionally, S-adenosyl-L-methionine-dependent rRNA methyltransferase which may methylate two specific adjacent adenosines in the loop of a conserved hairpin near the 3'-end of 12S mitochondrial rRNA. Component of the mitochondrial transcription initiation complex, composed at least of TFB2M, TFAM and POLRMT that is required for basal transcription of mitochondrial DNA. In this complex TFAM recruits POLRMT to a specific promoter whereas TFB2M induces structural changes in POLRMT to enable promoter opening and trapping of the DNA non-template strand. Stimulates transcription independently of the methyltransferase activity. The protein is Dimethyladenosine transferase 2, mitochondrial of Rattus norvegicus (Rat).